We begin with the raw amino-acid sequence, 200 residues long: NAD(P)H dehydrogenase (quinone) (200 aa).

Positions 4–191 (ILVLYHSLWG…TIARFQGRHV (188 aa)) constitute a Flavodoxin-like domain. FMN-binding positions include 10–15 (SLWGHV) and 79–81 (TRF). Trp-12 lines the NAD(+) pocket. Trp-99 contacts substrate. Residues 114-120 (STATQHG) and His-135 each bind FMN.

It belongs to the WrbA family. FMN is required as a cofactor.

It catalyses the reaction a quinone + NADH + H(+) = a quinol + NAD(+). The enzyme catalyses a quinone + NADPH + H(+) = a quinol + NADP(+). This chain is NAD(P)H dehydrogenase (quinone), found in Acidithiobacillus ferrooxidans (strain ATCC 53993 / BNL-5-31) (Leptospirillum ferrooxidans (ATCC 53993)).